The following is a 119-amino-acid chain: Large ribosomal subunit protein bL20 (119 aa).

The protein belongs to the bacterial ribosomal protein bL20 family.

Functionally, binds directly to 23S ribosomal RNA and is necessary for the in vitro assembly process of the 50S ribosomal subunit. It is not involved in the protein synthesizing functions of that subunit. This is Large ribosomal subunit protein bL20 from Shewanella halifaxensis (strain HAW-EB4).